The primary structure comprises 124 residues: Small ribosomal subunit protein uS13 (124 aa).

Positions 95–124 (GLPVRGQRTKTNARTRKGPKRTIAGKKKAK) are disordered.

The protein belongs to the universal ribosomal protein uS13 family. In terms of assembly, part of the 30S ribosomal subunit. Forms a loose heterodimer with protein S19. Forms two bridges to the 50S subunit in the 70S ribosome.

In terms of biological role, located at the top of the head of the 30S subunit, it contacts several helices of the 16S rRNA. In the 70S ribosome it contacts the 23S rRNA (bridge B1a) and protein L5 of the 50S subunit (bridge B1b), connecting the 2 subunits; these bridges are implicated in subunit movement. Contacts the tRNAs in the A and P-sites. This Rhodococcus erythropolis (strain PR4 / NBRC 100887) protein is Small ribosomal subunit protein uS13.